The following is a 279-amino-acid chain: Large ribosomal subunit protein mL46 (279 aa).

Lysine 230 bears the N6-acetyllysine mark.

This sequence belongs to the mitochondrion-specific ribosomal protein mL46 family. As to quaternary structure, component of the mitochondrial ribosome large subunit (39S) which comprises a 16S rRNA and about 50 distinct proteins.

It is found in the mitochondrion. The sequence is that of Large ribosomal subunit protein mL46 (MRPL46) from Pongo abelii (Sumatran orangutan).